The sequence spans 156 residues: Hydrogenase 3 maturation protease (156 aa).

Positions 16, 62, and 90 each coordinate Ni(2+).

This sequence belongs to the peptidase A31 family. In terms of assembly, monomer.

The enzyme catalyses This enzyme specifically removes a 32-amino acid peptide from the C-terminus of the precursor of the large subunit of E.coli hydrogenase 3 by cleavage at the C-terminal side of Arg-537.. Its function is as follows. Protease involved in the C-terminal processing of HycE, the large subunit of hydrogenase 3. The polypeptide is Hydrogenase 3 maturation protease (hycI) (Escherichia coli O157:H7).